Consider the following 132-residue polypeptide: DNA-directed RNA polymerase subunit omega (132 aa).

Belongs to the RNA polymerase subunit omega family. In terms of assembly, the RNAP catalytic core consists of 2 alpha, 1 beta, 1 beta' and 1 omega subunit. When a sigma factor is associated with the core the holoenzyme is formed, which can initiate transcription.

It carries out the reaction RNA(n) + a ribonucleoside 5'-triphosphate = RNA(n+1) + diphosphate. Its function is as follows. Promotes RNA polymerase assembly. Latches the N- and C-terminal regions of the beta' subunit thereby facilitating its interaction with the beta and alpha subunits. The chain is DNA-directed RNA polymerase subunit omega from Ehrlichia ruminantium (strain Welgevonden).